Here is a 444-residue protein sequence, read N- to C-terminus: Nuclear distribution protein nudF (444 aa).

The LisH domain maps to 9-41; that stretch reads QAEALHKAMLAYLSVINAPQTAETLREELHFDE. The stretch at 60-88 forms a coiled coil; sequence TGIARLQRRINDLEAEVRSLQAELEASPS. The interval 83 to 107 is disordered; sequence LEASPSAARAKNQDPTNWLPKPSST. 7 WD repeats span residues 112-153, 155-195, 199-239, 243-282, 285-345, 347-386, and 391-437; these read SHRD…RTLK, HIRG…ANIR, GHDH…CVKV, ATES…PKAA, GHEN…IKTL, GHDN…RLVK, and AHEH…GCAD.

This sequence belongs to the WD repeat LIS1/nudF family. As to quaternary structure, interacts with dynein. Self-associates. Interacts with bnfA, nudC and nudE.

It localises to the cytoplasm. The protein resides in the cytoskeleton. The protein localises to the spindle pole. Positively regulates the activity of the minus-end directed microtubule motor protein dynein. May enhance dynein-mediated microtubule sliding by targeting dynein to the microtubule plus end. Required for nuclear migration during vegetative growth as well as development. Required for retrograde early endosome (EE) transport from the hyphal tip. Required for localization of dynein to the mitotic spindle poles. Recruits additional proteins to the dynein complex at SPBs. The polypeptide is Nuclear distribution protein nudF (Emericella nidulans (strain FGSC A4 / ATCC 38163 / CBS 112.46 / NRRL 194 / M139) (Aspergillus nidulans)).